The sequence spans 130 residues: Protein ApaG (130 aa).

Residues 3 to 127 (SQTTRDIEVT…FSLDSPHEKP (125 aa)) form the ApaG domain.

This is Protein ApaG from Paramagnetospirillum magneticum (strain ATCC 700264 / AMB-1) (Magnetospirillum magneticum).